A 61-amino-acid chain; its full sequence is Small ribosomal subunit protein eS30A (61 aa).

The interval 1 to 36 (MGKVHGSLARAGKVKSQTPKVEKQEKPKQPKGRAYK) is disordered.

This sequence belongs to the eukaryotic ribosomal protein eS30 family. As to quaternary structure, component of the small ribosomal subunit (SSU). Mature yeast ribosomes consist of a small (40S) and a large (60S) subunit. The 40S small subunit contains 1 molecule of ribosomal RNA (18S rRNA) and at least 33 different proteins. The large 60S subunit contains 3 rRNA molecules (25S, 5.8S and 5S rRNA) and at least 46 different proteins.

Its subcellular location is the cytoplasm. It localises to the nucleus. Component of the ribosome, a large ribonucleoprotein complex responsible for the synthesis of proteins in the cell. The small ribosomal subunit (SSU) binds messenger RNAs (mRNAs) and translates the encoded message by selecting cognate aminoacyl-transfer RNA (tRNA) molecules. The large subunit (LSU) contains the ribosomal catalytic site termed the peptidyl transferase center (PTC), which catalyzes the formation of peptide bonds, thereby polymerizing the amino acids delivered by tRNAs into a polypeptide chain. The nascent polypeptides leave the ribosome through a tunnel in the LSU and interact with protein factors that function in enzymatic processing, targeting, and the membrane insertion of nascent chains at the exit of the ribosomal tunnel. In Schizosaccharomyces pombe (strain 972 / ATCC 24843) (Fission yeast), this protein is Small ribosomal subunit protein eS30A (rps3001).